The sequence spans 160 residues: SsrA-binding protein (160 aa).

This sequence belongs to the SmpB family.

Its subcellular location is the cytoplasm. Its function is as follows. Required for rescue of stalled ribosomes mediated by trans-translation. Binds to transfer-messenger RNA (tmRNA), required for stable association of tmRNA with ribosomes. tmRNA and SmpB together mimic tRNA shape, replacing the anticodon stem-loop with SmpB. tmRNA is encoded by the ssrA gene; the 2 termini fold to resemble tRNA(Ala) and it encodes a 'tag peptide', a short internal open reading frame. During trans-translation Ala-aminoacylated tmRNA acts like a tRNA, entering the A-site of stalled ribosomes, displacing the stalled mRNA. The ribosome then switches to translate the ORF on the tmRNA; the nascent peptide is terminated with the 'tag peptide' encoded by the tmRNA and targeted for degradation. The ribosome is freed to recommence translation, which seems to be the essential function of trans-translation. The polypeptide is SsrA-binding protein (Mycobacterium leprae (strain Br4923)).